A 378-amino-acid polypeptide reads, in one-letter code: 1-acyl-sn-glycerol-3-phosphate acyltransferase delta (378 aa).

Residues 11 to 31 form a helical membrane-spanning segment; it reads FLCHLVFCYVFIASGLIINTI. Positions 96 to 101 match the HXXXXD motif motif; it reads HKFEID. 3 helical membrane passes run 125–145, 307–327, and 338–358; these read ELAY…VFCS, TLVN…QFLV, and LASF…MIGV.

The protein belongs to the 1-acyl-sn-glycerol-3-phosphate acyltransferase family.

The protein localises to the endoplasmic reticulum membrane. The catalysed reaction is a 1-acyl-sn-glycero-3-phosphate + an acyl-CoA = a 1,2-diacyl-sn-glycero-3-phosphate + CoA. The enzyme catalyses (4Z,7Z,10Z,13Z,16Z,19Z)-docosahexaenoyl-CoA + 1-hexadecanoyl-sn-glycero-3-phosphate = 1-hexadecanoyl-2-(4Z,7Z,10Z,13Z,16Z,19Z-docosahexaenoyl)-sn-glycero-3-phosphate + CoA. It catalyses the reaction 1-octadecanoyl-sn-glycero-3-phosphate + (9Z,12Z)-octadecadienoyl-CoA = 1-octadecanoyl-2-(9Z,12Z-octadecadienoyl)-sn-glycero-3-phosphate + CoA. It carries out the reaction 1-octadecanoyl-sn-glycero-3-phosphate + (4Z,7Z,10Z,13Z,16Z,19Z)-docosahexaenoyl-CoA = 1-octadecanoyl-2-(4Z,7Z,10Z,13Z,16Z,19Z-docosahexaenoyl)-sn-glycero-3-phosphate + CoA. The catalysed reaction is (4Z,7Z,10Z,13Z,16Z,19Z)-docosahexaenoyl-CoA + 1-(9Z-octadecenoyl)-sn-glycero-3-phosphate = 1-(9Z-octadecenoyl)-2-(4Z,7Z,10Z,13Z,16Z,19Z-docosahexaenoyl)-sn-glycero-3-phosphate + CoA. It functions in the pathway phospholipid metabolism; CDP-diacylglycerol biosynthesis; CDP-diacylglycerol from sn-glycerol 3-phosphate: step 2/3. In terms of biological role, converts 1-acyl-sn-glycerol-3-phosphate (lysophosphatidic acid or LPA) into 1,2-diacyl-sn-glycerol-3-phosphate (phosphatidic acid or PA) by incorporating an acyl moiety at the sn-2 position of the glycerol backbone. Exhibits high acyl-CoA specificity for polyunsaturated fatty acyl-CoA, especially docosahexaenoyl-CoA (22:6-CoA, DHA-CoA). This Pongo abelii (Sumatran orangutan) protein is 1-acyl-sn-glycerol-3-phosphate acyltransferase delta (AGPAT4).